Reading from the N-terminus, the 602-residue chain is Putative ankyrin repeat protein L100 (602 aa).

11 ANK repeats span residues 133 to 162 (VLFYLLKTNLNENRLRIVEHIFKNPSSLIS), 269 to 294 (YLEKIFSLSCKYHDSRIAEILIKKSI), 295 to 324 (NKERCLISACEAGFLEIVECLVKQDVNINL), 325 to 354 (LKGTPLVTACQFGHLLIVDFLVNNSADIHI), 355 to 384 (RDNAPILYACRYGHVDIVDYLIGKGIDIHT), 386 to 414 (SSQALINACNRGHLNVMELLVEKGADIRS), 416 to 444 (ENILVVEACRNTNADILRFLVRIGVDVLS), 445 to 474 (KGVEPLIVACERGQLAIVQYLIDIGIDICA), 476 to 504 (DNEALIKSCRSGFANIVNLLIENGADVKA), 506 to 534 (DNEALIIACEKCNHTIVTILVSNGADITA), and 536 to 566 (NNEALIRACHNEAVGKYFIDFLIEKGADVHA).

The protein is Putative ankyrin repeat protein L100 of Acanthamoeba polyphaga mimivirus (APMV).